The following is a 264-amino-acid chain: Thiazole synthase (264 aa).

The active-site Schiff-base intermediate with DXP is the K106. 1-deoxy-D-xylulose 5-phosphate-binding positions include G167, 193–194, and 215–216; these read AG and NS.

The protein belongs to the ThiG family. Homotetramer. Forms heterodimers with either ThiH or ThiS.

The protein resides in the cytoplasm. The enzyme catalyses [ThiS sulfur-carrier protein]-C-terminal-Gly-aminoethanethioate + 2-iminoacetate + 1-deoxy-D-xylulose 5-phosphate = [ThiS sulfur-carrier protein]-C-terminal Gly-Gly + 2-[(2R,5Z)-2-carboxy-4-methylthiazol-5(2H)-ylidene]ethyl phosphate + 2 H2O + H(+). The protein operates within cofactor biosynthesis; thiamine diphosphate biosynthesis. Functionally, catalyzes the rearrangement of 1-deoxy-D-xylulose 5-phosphate (DXP) to produce the thiazole phosphate moiety of thiamine. Sulfur is provided by the thiocarboxylate moiety of the carrier protein ThiS. In vitro, sulfur can be provided by H(2)S. This is Thiazole synthase from Pseudomonas fluorescens (strain SBW25).